A 390-amino-acid polypeptide reads, in one-letter code: HIT domain-containing protein DDB_G0272839 (390 aa).

Positions 168-201 (DNENEKEKEKEMELDNDNTNTESIPPITSKSTST) are disordered. Residues 184–201 (DNTNTESIPPITSKSTST) are compositionally biased toward low complexity. The HIT domain maps to 232 to 343 (YFCNKPESFL…ISNDYNTKYL (112 aa)).

The polypeptide is HIT domain-containing protein DDB_G0272839 (Dictyostelium discoideum (Social amoeba)).